The sequence spans 271 residues: tRNA pseudouridine synthase A (271 aa).

Aspartate 52 acts as the Nucleophile in catalysis. Substrate is bound at residue tyrosine 110.

The protein belongs to the tRNA pseudouridine synthase TruA family. In terms of assembly, homodimer.

It carries out the reaction uridine(38/39/40) in tRNA = pseudouridine(38/39/40) in tRNA. In terms of biological role, formation of pseudouridine at positions 38, 39 and 40 in the anticodon stem and loop of transfer RNAs. The chain is tRNA pseudouridine synthase A from Maridesulfovibrio salexigens (strain ATCC 14822 / DSM 2638 / NCIMB 8403 / VKM B-1763) (Desulfovibrio salexigens).